A 404-amino-acid polypeptide reads, in one-letter code: Cysteine desulfurase IscS (404 aa).

Residues 75 to 76 (AT), Asn-155, Gln-183, and 203 to 205 (SAH) contribute to the pyridoxal 5'-phosphate site. Lys-206 bears the N6-(pyridoxal phosphate)lysine mark. Position 243 (Thr-243) interacts with pyridoxal 5'-phosphate. The Cysteine persulfide intermediate role is filled by Cys-328. Cys-328 is a [2Fe-2S] cluster binding site.

This sequence belongs to the class-V pyridoxal-phosphate-dependent aminotransferase family. NifS/IscS subfamily. In terms of assembly, homodimer. Forms a heterotetramer with IscU, interacts with other sulfur acceptors. It depends on pyridoxal 5'-phosphate as a cofactor.

The protein resides in the cytoplasm. It catalyses the reaction (sulfur carrier)-H + L-cysteine = (sulfur carrier)-SH + L-alanine. Its pathway is cofactor biosynthesis; iron-sulfur cluster biosynthesis. Functionally, master enzyme that delivers sulfur to a number of partners involved in Fe-S cluster assembly, tRNA modification or cofactor biosynthesis. Catalyzes the removal of elemental sulfur atoms from cysteine to produce alanine. Functions as a sulfur delivery protein for Fe-S cluster synthesis onto IscU, an Fe-S scaffold assembly protein, as well as other S acceptor proteins. This is Cysteine desulfurase IscS from Pseudomonas aeruginosa (strain LESB58).